A 341-amino-acid polypeptide reads, in one-letter code: tRNA N6-adenosine threonylcarbamoyltransferase (341 aa).

His111 and His115 together coordinate Fe cation. Substrate is bound by residues Leu134 to Gly138, Asp167, Gly180, and Asn276. Residue Asp304 participates in Fe cation binding.

This sequence belongs to the KAE1 / TsaD family. Requires Fe(2+) as cofactor.

It localises to the cytoplasm. The catalysed reaction is L-threonylcarbamoyladenylate + adenosine(37) in tRNA = N(6)-L-threonylcarbamoyladenosine(37) in tRNA + AMP + H(+). In terms of biological role, required for the formation of a threonylcarbamoyl group on adenosine at position 37 (t(6)A37) in tRNAs that read codons beginning with adenine. Is involved in the transfer of the threonylcarbamoyl moiety of threonylcarbamoyl-AMP (TC-AMP) to the N6 group of A37, together with TsaE and TsaB. TsaD likely plays a direct catalytic role in this reaction. In Pseudomonas fluorescens (strain ATCC BAA-477 / NRRL B-23932 / Pf-5), this protein is tRNA N6-adenosine threonylcarbamoyltransferase.